The following is a 138-amino-acid chain: Acidic phospholipase A2 CoaPLA2 (138 aa).

Positions 1–16 are cleaved as a signal peptide; sequence MRTLWIVAVLLLGVEG. Cystine bridges form between Cys-42–Cys-131, Cys-44–Cys-60, Cys-59–Cys-111, Cys-65–Cys-138, Cys-66–Cys-104, Cys-73–Cys-97, and Cys-91–Cys-102. Tyr-43, Gly-45, and Gly-47 together coordinate Ca(2+). The active site involves His-63. Ca(2+) is bound at residue Asp-64. Asp-105 is a catalytic residue.

Belongs to the phospholipase A2 family. Group II subfamily. D49 sub-subfamily. In terms of assembly, homodimer. Ca(2+) serves as cofactor. Expressed by the venom gland.

The protein resides in the secreted. It carries out the reaction a 1,2-diacyl-sn-glycero-3-phosphocholine + H2O = a 1-acyl-sn-glycero-3-phosphocholine + a fatty acid + H(+). Snake venom phospholipase A2 (PLA2) that shows very low inhibition of ADP-induced platelet aggregation in platelet-rich plasma of human, rabbit and guinea pig. Shows edema-inducing activity and myotoxicity. PLA2 catalyzes the calcium-dependent hydrolysis of the 2-acyl groups in 3-sn-phosphoglycerides. In Crotalus lutosus abyssus (Grand Canyon rattlesnake), this protein is Acidic phospholipase A2 CoaPLA2.